The primary structure comprises 980 residues: Valine--tRNA ligase (980 aa).

Residues 1 to 40 form a disordered region; that stretch reads MADKGCEAAQSKDSSAPGSGEPRPKTEKELERERQKAAKL. Residues 22–40 are compositionally biased toward basic and acidic residues; sequence PRPKTEKELERERQKAAKL. The short motif at 139 to 149 is the 'HIGH' region element; that stretch reads PNVTGALHIGH. A 'KMSKS' region motif is present at residues 652 to 656; that stretch reads KMSKS. ATP is bound at residue Lys-655.

The protein belongs to the class-I aminoacyl-tRNA synthetase family.

It is found in the cytoplasm. It carries out the reaction tRNA(Val) + L-valine + ATP = L-valyl-tRNA(Val) + AMP + diphosphate. This chain is Valine--tRNA ligase (vas2), found in Schizosaccharomyces pombe (strain 972 / ATCC 24843) (Fission yeast).